Consider the following 317-residue polypeptide: Enoyl-CoA delta isomerase 3, peroxisomal (317 aa).

The ACB domain occupies 1–46 (MPKPGVFNFVNKATWDARNALGSLPKETARKNYVDLVSSLSSSSEA). Residues 40–60 (LSSSSEAPSQGKRGADEKARE) form a disordered region. 120–124 (SGNDL) is a substrate binding site. The Microbody targeting signal motif lies at 315–317 (AKL).

It belongs to the enoyl-CoA hydratase/isomerase family. Expressed at high levels in the kidney. Also detected at very low levels in the duodenum, jejunum, ileum, heart, liver, lung, and brown adipose tissue (at protein level). In the kidney, expression seems to be localized mainly to the proximal tubule.

The protein resides in the peroxisome. The catalysed reaction is a (3Z)-enoyl-CoA = a 4-saturated (2E)-enoyl-CoA. It carries out the reaction a (3E)-enoyl-CoA = a 4-saturated (2E)-enoyl-CoA. It catalyses the reaction (3E)-nonenoyl-CoA = (2E)-nonenoyl-CoA. Catalyzes the isomerization of trans-3-nonenoyl-CoA into trans-2-nonenoyl-CoA. May also have activity towards other enoyl-CoA species. The polypeptide is Enoyl-CoA delta isomerase 3, peroxisomal (Mus musculus (Mouse)).